Consider the following 406-residue polypeptide: UPF0754 membrane protein CYA_0973 (406 aa).

A run of 2 helical transmembrane segments spans residues 1 to 21 (MALW…YFTN) and 385 to 405 (IVNL…LFLL).

It belongs to the UPF0754 family.

It localises to the cell inner membrane. In Synechococcus sp. (strain JA-3-3Ab) (Cyanobacteria bacterium Yellowstone A-Prime), this protein is UPF0754 membrane protein CYA_0973.